The primary structure comprises 121 residues: Large ribosomal subunit protein uL18 (121 aa).

It belongs to the universal ribosomal protein uL18 family. As to quaternary structure, part of the 50S ribosomal subunit; part of the 5S rRNA/L5/L18/L25 subcomplex. Contacts the 5S and 23S rRNAs.

This is one of the proteins that bind and probably mediate the attachment of the 5S RNA into the large ribosomal subunit, where it forms part of the central protuberance. The polypeptide is Large ribosomal subunit protein uL18 (Thermoanaerobacter pseudethanolicus (strain ATCC 33223 / 39E) (Clostridium thermohydrosulfuricum)).